The chain runs to 190 residues: Probable molybdenum cofactor guanylyltransferase (190 aa).

Residues 9 to 11, lysine 21, aspartate 65, and aspartate 94 each bind GTP; that span reads LCG. Position 94 (aspartate 94) interacts with Mg(2+).

Belongs to the MobA family. The cofactor is Mg(2+).

Its subcellular location is the cytoplasm. The enzyme catalyses Mo-molybdopterin + GTP + H(+) = Mo-molybdopterin guanine dinucleotide + diphosphate. Transfers a GMP moiety from GTP to Mo-molybdopterin (Mo-MPT) cofactor (Moco or molybdenum cofactor) to form Mo-molybdopterin guanine dinucleotide (Mo-MGD) cofactor. This is Probable molybdenum cofactor guanylyltransferase from Flavobacterium johnsoniae (strain ATCC 17061 / DSM 2064 / JCM 8514 / BCRC 14874 / CCUG 350202 / NBRC 14942 / NCIMB 11054 / UW101) (Cytophaga johnsonae).